The chain runs to 435 residues: Glutamyl-tRNA reductase (435 aa).

Substrate-binding positions include 49 to 52 (TCNR), serine 109, 114 to 116 (ETQ), and glutamine 120. The active-site Nucleophile is cysteine 50. 189 to 194 (GAGEMS) contacts NADP(+).

It belongs to the glutamyl-tRNA reductase family. As to quaternary structure, homodimer.

The catalysed reaction is (S)-4-amino-5-oxopentanoate + tRNA(Glu) + NADP(+) = L-glutamyl-tRNA(Glu) + NADPH + H(+). Its pathway is porphyrin-containing compound metabolism; protoporphyrin-IX biosynthesis; 5-aminolevulinate from L-glutamyl-tRNA(Glu): step 1/2. Functionally, catalyzes the NADPH-dependent reduction of glutamyl-tRNA(Glu) to glutamate 1-semialdehyde (GSA). This chain is Glutamyl-tRNA reductase, found in Listeria monocytogenes serotype 4b (strain CLIP80459).